Consider the following 685-residue polypeptide: Probable cysteine desulfurase (685 aa).

The segment at 1–282 (MTRSPCSTTS…RDEHEVFDVA (282 aa)) is cargo-loading domain. 2 disordered regions span residues 48–135 (SIRP…TSAG) and 162–185 (PTPA…VPDT). A compositionally biased stretch (low complexity) spans 71 to 85 (ATAATSAGRTAAGTA). The segment covering 102–121 (LPPPASPAPEAPPQAAPPAP) has biased composition (pro residues). Positions 122–135 (RGSAPDATAATSAG) are enriched in low complexity. Residues 164–178 (PAGPEAPPQSAPPAP) are compositionally biased toward pro residues. Position 502 is an N6-(pyridoxal phosphate)lysine (Lys-502). The active-site Cysteine persulfide intermediate is Cys-640.

It belongs to the class-V pyridoxal-phosphate-dependent aminotransferase family. Csd subfamily. As to quaternary structure, isolated from bacteria in a complex with encapsulin 2A (AC I3NID5), strongly suggesting it is found in a type 2A encapsulin nanocompartment. There are 1-2 copies of this protein in each encapsulin shell. Pyridoxal 5'-phosphate is required as a cofactor.

It localises to the encapsulin nanocompartment. Its subcellular location is the cell membrane. The catalysed reaction is (sulfur carrier)-H + L-cysteine = (sulfur carrier)-SH + L-alanine. Functionally, cargo protein of a type 2A encapsulin nanocompartment involved in sulfur metabolism. Cysteine desulfurases mobilize the sulfur from L-cysteine to yield L-alanine, an essential step in sulfur metabolism for biosynthesis of a variety of sulfur-containing biomolecules. This chain is Probable cysteine desulfurase, found in Mycolicibacterium paratuberculosis (strain ATCC BAA-968 / K-10) (Mycobacterium paratuberculosis).